The sequence spans 89 residues: Small ribosomal subunit protein uS19 (89 aa).

The protein belongs to the universal ribosomal protein uS19 family.

In terms of biological role, protein S19 forms a complex with S13 that binds strongly to the 16S ribosomal RNA. This Xanthomonas axonopodis pv. citri (strain 306) protein is Small ribosomal subunit protein uS19.